The chain runs to 115 residues: CRISPR-associated endoribonuclease Cas2 (115 aa).

Asp22 serves as a coordination point for Mg(2+).

The protein belongs to the CRISPR-associated endoribonuclease Cas2 protein family. Homodimer, forms a heterotetramer with a Cas1 homodimer. Requires Mg(2+) as cofactor.

Its function is as follows. CRISPR (clustered regularly interspaced short palindromic repeat), is an adaptive immune system that provides protection against mobile genetic elements (viruses, transposable elements and conjugative plasmids). CRISPR clusters contain sequences complementary to antecedent mobile elements and target invading nucleic acids. CRISPR clusters are transcribed and processed into CRISPR RNA (crRNA). Functions as a ssRNA-specific endoribonuclease. Involved in the integration of spacer DNA into the CRISPR cassette. In Flavobacterium psychrophilum (strain ATCC 49511 / DSM 21280 / CIP 103535 / JIP02/86), this protein is CRISPR-associated endoribonuclease Cas2.